Reading from the N-terminus, the 775-residue chain is 5-methyltetrahydropteroyltriglutamate--homocysteine methyltransferase (775 aa).

Residues 15 to 18 and K118 contribute to the 5-methyltetrahydropteroyltri-L-glutamate site; that span reads RELK. Residues 448–450 and E501 contribute to the L-homocysteine site; that span reads IGS. L-methionine is bound by residues 448 to 450 and E501; that span reads IGS. Residues 532 to 533 and W578 each bind 5-methyltetrahydropteroyltri-L-glutamate; that span reads RC. D616 is an L-homocysteine binding site. D616 contacts L-methionine. E622 serves as a coordination point for 5-methyltetrahydropteroyltri-L-glutamate. Positions 658, 660, and 682 each coordinate Zn(2+). H711 functions as the Proton donor in the catalytic mechanism. Residue C743 coordinates Zn(2+).

The protein belongs to the vitamin-B12 independent methionine synthase family. Zn(2+) serves as cofactor.

The enzyme catalyses 5-methyltetrahydropteroyltri-L-glutamate + L-homocysteine = tetrahydropteroyltri-L-glutamate + L-methionine. It participates in amino-acid biosynthesis; L-methionine biosynthesis via de novo pathway; L-methionine from L-homocysteine (MetE route): step 1/1. Catalyzes the transfer of a methyl group from 5-methyltetrahydrofolate to homocysteine resulting in methionine formation. This chain is 5-methyltetrahydropteroyltriglutamate--homocysteine methyltransferase, found in Cytophaga hutchinsonii (strain ATCC 33406 / DSM 1761 / CIP 103989 / NBRC 15051 / NCIMB 9469 / D465).